An 81-amino-acid chain; its full sequence is Conotoxin Im016 (81 aa).

The N-terminal stretch at 1–21 (MSTLGMMLLILLLLVPLATFA) is a signal peptide. A propeptide spanning residues 22–31 (DDGPTMRGHR) is cleaved from the precursor.

The protein belongs to the conotoxin N superfamily. Post-translationally, contains 5 disulfide bonds. In terms of tissue distribution, expressed by the venom duct.

It is found in the secreted. Functionally, probable neurotoxin. The sequence is that of Conotoxin Im016 from Conus imperialis (Imperial cone).